The primary structure comprises 101 residues: HssA/B-like protein 40 (101 aa).

The interval Met1–Ser26 is disordered.

This sequence belongs to the hssA/B family.

The protein is HssA/B-like protein 40 (hssl40) of Dictyostelium discoideum (Social amoeba).